We begin with the raw amino-acid sequence, 1291 residues long: DNA-directed RNA polymerase subunit beta (1291 aa).

This sequence belongs to the RNA polymerase beta chain family. The RNAP catalytic core consists of 2 alpha, 1 beta, 1 beta' and 1 omega subunit. When a sigma factor is associated with the core the holoenzyme is formed, which can initiate transcription.

The catalysed reaction is RNA(n) + a ribonucleoside 5'-triphosphate = RNA(n+1) + diphosphate. In terms of biological role, DNA-dependent RNA polymerase catalyzes the transcription of DNA into RNA using the four ribonucleoside triphosphates as substrates. The sequence is that of DNA-directed RNA polymerase subunit beta from Mycoplasma mycoides subsp. mycoides SC (strain CCUG 32753 / NCTC 10114 / PG1).